We begin with the raw amino-acid sequence, 599 residues long: NADH-quinone oxidoreductase subunit C/D (599 aa).

An NADH dehydrogenase I subunit C region spans residues 1–190; sequence MMIDQIAQES…DPFELTRQKE (190 aa). The interval 214-599 is NADH dehydrogenase I subunit D; the sequence is DFMFLNLGPN…IDFVMSDVDR (386 aa).

In the N-terminal section; belongs to the complex I 30 kDa subunit family. This sequence in the C-terminal section; belongs to the complex I 49 kDa subunit family. As to quaternary structure, NDH-1 is composed of 13 different subunits. Subunits NuoB, CD, E, F, and G constitute the peripheral sector of the complex.

Its subcellular location is the cell inner membrane. The enzyme catalyses a quinone + NADH + 5 H(+)(in) = a quinol + NAD(+) + 4 H(+)(out). Its function is as follows. NDH-1 shuttles electrons from NADH, via FMN and iron-sulfur (Fe-S) centers, to quinones in the respiratory chain. The immediate electron acceptor for the enzyme in this species is believed to be ubiquinone. Couples the redox reaction to proton translocation (for every two electrons transferred, four hydrogen ions are translocated across the cytoplasmic membrane), and thus conserves the redox energy in a proton gradient. The sequence is that of NADH-quinone oxidoreductase subunit C/D from Photorhabdus laumondii subsp. laumondii (strain DSM 15139 / CIP 105565 / TT01) (Photorhabdus luminescens subsp. laumondii).